A 204-amino-acid polypeptide reads, in one-letter code: Somatotropin (204 aa).

Residues 1 to 17 form the signal peptide; the sequence is MDRVLLLLSVLSLGVSS. Residue Gln18 is modified to Pyrrolidone carboxylic acid. His36 serves as a coordination point for Zn(2+). A disulfide bond links Cys69 and Cys177. Residue Glu186 participates in Zn(2+) binding. Cysteines 194 and 202 form a disulfide.

It belongs to the somatotropin/prolactin family.

It is found in the secreted. In terms of biological role, growth hormone plays an important role in growth control and is involved in the regulation of several anabolic processes. Implicated as an osmoregulatory substance important for seawater adaptation. This Sciaenops ocellatus (Red drum) protein is Somatotropin (gh).